A 163-amino-acid polypeptide reads, in one-letter code: uncharacterized protein (163 aa).

Positions 101–162 form a coiled coil; sequence LESMKVERKP…KMGERILERE (62 aa).

This is an uncharacterized protein from Aquifex aeolicus (strain VF5).